A 613-amino-acid polypeptide reads, in one-letter code: MPTTFTPNSPASSCSIHHRASPSRGARNSVRFTRPRAAAAATNSVLSAPSSVPPAYVPPPPPPPTKMFPEAGDAAAAKAAARRCGKKKDGLNFFQRAAAVALDAFEEGFITNVLERPHALPRTADPAVQIAGNFAPVGEQPPVRSLPVSGRIPPFINGVYARNGANPHFEPTAGHHLFDGDGMVHAVRIRNGAAESYACRFTETARLGQERALGRAVFPKAIGELHGHSGIARLALFYARGLCGLVDPSHGTGVANAGLVYFNGRLLAMSEDDLPYQVRVTADGDLETVGRYDFDGQLGCAMIAHPKLDPVSGELFALSYDVIKKPYLKYFYFDADGTKSPDVEIELEQPTMIHDFAITENFVVVPDHQVVFKLGEMFRGGSPVVLDREKTSRFGVLPKHATSSLEMVWVDVPDCFCFHLWNAWEEAESGEVVVVGSCMTPADSIFNESDEHLESVLTEIRLNTRTGESTRRAVLPPAAQVNLEVGMVNRAMLGRKTRYAYLAVAEPWPKVSGFAKVDLATGELTKFEYGEGRFGGEPCFVPMGGAGAAASPARGEDDGYILSFVRDEAAGTSELLVVNAADMRLEATVQLPSRVPYGFHGTFINAGELATQA.

The segment covering 1 to 15 (MPTTFTPNSPASSCS) has biased composition (polar residues). The N-terminal 36 residues, 1–36 (MPTTFTPNSPASSCSIHHRASPSRGARNSVRFTRPR), are a transit peptide targeting the chloroplast. The segment at 1–62 (MPTTFTPNSP…PPAYVPPPPP (62 aa)) is disordered. Residues 37–50 (AAAAATNSVLSAPS) are compositionally biased toward low complexity. Over residues 51-62 (SVPPAYVPPPPP) the composition is skewed to pro residues. His-305, His-354, His-419, and His-600 together coordinate Fe cation.

This sequence belongs to the carotenoid oxygenase family. Requires Fe(2+) as cofactor.

It localises to the plastid. The protein resides in the chloroplast. The enzyme catalyses a 9-cis-epoxycarotenoid + O2 = a 12'-apo-carotenal + 2-cis,4-trans-xanthoxin. The catalysed reaction is 9-cis-violaxanthin + O2 = (3S,5R,6S)-5,6-epoxy-3-hydroxy-5,6-dihydro-12'-apo-beta-caroten-12'-al + 2-cis,4-trans-xanthoxin. It carries out the reaction 9'-cis-neoxanthin + O2 = (3S,5R,6R)-3,5-dihydroxy-6,7-didehydro-5,6-dihydro-12'-apo-beta-caroten-12'-al + 2-cis,4-trans-xanthoxin. Functionally, has a 11,12(11',12') 9-cis epoxycarotenoid cleavage activity. Catalyzes the first step of abscisic-acid biosynthesis from carotenoids. This is 9-cis-epoxycarotenoid dioxygenase NCED5, chloroplastic from Oryza sativa subsp. japonica (Rice).